We begin with the raw amino-acid sequence, 165 residues long: SsrA-binding protein (165 aa).

This sequence belongs to the SmpB family.

The protein localises to the cytoplasm. Functionally, required for rescue of stalled ribosomes mediated by trans-translation. Binds to transfer-messenger RNA (tmRNA), required for stable association of tmRNA with ribosomes. tmRNA and SmpB together mimic tRNA shape, replacing the anticodon stem-loop with SmpB. tmRNA is encoded by the ssrA gene; the 2 termini fold to resemble tRNA(Ala) and it encodes a 'tag peptide', a short internal open reading frame. During trans-translation Ala-aminoacylated tmRNA acts like a tRNA, entering the A-site of stalled ribosomes, displacing the stalled mRNA. The ribosome then switches to translate the ORF on the tmRNA; the nascent peptide is terminated with the 'tag peptide' encoded by the tmRNA and targeted for degradation. The ribosome is freed to recommence translation, which seems to be the essential function of trans-translation. The protein is SsrA-binding protein of Ruthia magnifica subsp. Calyptogena magnifica.